The chain runs to 466 residues: Argininosuccinate lyase (466 aa).

This sequence belongs to the lyase 1 family. Argininosuccinate lyase subfamily.

It is found in the cytoplasm. The enzyme catalyses 2-(N(omega)-L-arginino)succinate = fumarate + L-arginine. It participates in amino-acid biosynthesis; L-arginine biosynthesis; L-arginine from L-ornithine and carbamoyl phosphate: step 3/3. The sequence is that of Argininosuccinate lyase from Syntrophobacter fumaroxidans (strain DSM 10017 / MPOB).